Consider the following 303-residue polypeptide: MYYGFDIGGTKIALGVFDSGRQLQWEKRVPTPRDSYDAFLDAVCELVAEADQRFGCKGSVGIGIPGMPETEDGTLYASNVPAASGKPLRADLSARLDRDVRLDNDANCFALSEAWDDEFTQYPLVMGLILGTGVGGGLIFNGKPITGKSYITGEFGHMRLPVDALTMMGLDFPLRRCGCGQHGCIENYLSGRGFAWLYQHYYHQPLQAPEIIALYDQGDEQARAHVERYLDLLAVCLGNILTIVDPDLVVIGGGLSNFPAITTQLADRLPRHLLPVARVPRIERARHGDAGGMRGAAFLHLTD.

ATP-binding positions include 4-11 (GFDIGGTK) and 133-140 (GVGGGLIF). Zn(2+) is bound by residues His157, Cys177, Cys179, and Cys184.

This sequence belongs to the ROK (NagC/XylR) family. NagK subfamily.

It catalyses the reaction N-acetyl-D-glucosamine + ATP = N-acetyl-D-glucosamine 6-phosphate + ADP + H(+). The protein operates within cell wall biogenesis; peptidoglycan recycling. In terms of biological role, catalyzes the phosphorylation of N-acetyl-D-glucosamine (GlcNAc) derived from cell-wall degradation, yielding GlcNAc-6-P. This chain is N-acetyl-D-glucosamine kinase, found in Escherichia coli O7:K1 (strain IAI39 / ExPEC).